The primary structure comprises 389 residues: Homoserine O-acetyltransferase (389 aa).

The AB hydrolase-1 domain occupies 63–371; it reads NAVLVLHALT…SSDYGHDGFL (309 aa). S168 functions as the Nucleophile in the catalytic mechanism. Residue R240 participates in substrate binding. Residues D334 and H367 contribute to the active site. D368 contributes to the substrate binding site.

It belongs to the AB hydrolase superfamily. MetX family. As to quaternary structure, homodimer.

It is found in the cytoplasm. The catalysed reaction is L-homoserine + acetyl-CoA = O-acetyl-L-homoserine + CoA. It participates in amino-acid biosynthesis; L-methionine biosynthesis via de novo pathway; O-acetyl-L-homoserine from L-homoserine: step 1/1. Its function is as follows. Transfers an acetyl group from acetyl-CoA to L-homoserine, forming acetyl-L-homoserine. This is Homoserine O-acetyltransferase from Clavibacter michiganensis subsp. michiganensis (strain NCPPB 382).